The sequence spans 328 residues: UPF0421 protein SAR1980 (328 aa).

4 consecutive transmembrane segments (helical) span residues 19-39 (IAIF…IYAI), 61-81 (LPAT…FGDQ), 108-128 (VAVL…IFNF), and 132-152 (TLTA…VFPP).

This sequence belongs to the UPF0421 family.

Its subcellular location is the cell membrane. The protein is UPF0421 protein SAR1980 of Staphylococcus aureus (strain MRSA252).